Consider the following 185-residue polypeptide: Ribonuclease HII (185 aa).

The 185-residue stretch at 1–185 folds into the RNase H type-2 domain; that stretch reads MIILGIDEAG…KSYKPIQLLL (185 aa). A divalent metal cation contacts are provided by aspartate 7, glutamate 8, and aspartate 99.

It belongs to the RNase HII family. It depends on Mn(2+) as a cofactor. The cofactor is Mg(2+).

It is found in the cytoplasm. It catalyses the reaction Endonucleolytic cleavage to 5'-phosphomonoester.. Functionally, endonuclease that specifically degrades the RNA of RNA-DNA hybrids. The chain is Ribonuclease HII from Francisella tularensis subsp. novicida (strain U112).